Consider the following 344-residue polypeptide: Phosphoribosylformylglycinamidine cyclo-ligase (344 aa).

Belongs to the AIR synthase family.

The protein resides in the cytoplasm. It carries out the reaction 2-formamido-N(1)-(5-O-phospho-beta-D-ribosyl)acetamidine + ATP = 5-amino-1-(5-phospho-beta-D-ribosyl)imidazole + ADP + phosphate + H(+). The protein operates within purine metabolism; IMP biosynthesis via de novo pathway; 5-amino-1-(5-phospho-D-ribosyl)imidazole from N(2)-formyl-N(1)-(5-phospho-D-ribosyl)glycinamide: step 2/2. The chain is Phosphoribosylformylglycinamidine cyclo-ligase from Leptospira interrogans serogroup Icterohaemorrhagiae serovar Lai (strain 56601).